The chain runs to 371 residues: Chaperone protein DnaJ (371 aa).

The J domain maps to 5–70 (CYYEILNVSK…SKRSRYDQFG (66 aa)). The CR-type zinc finger occupies 127–204 (GVEKEITIPR…CYGNGKVKKQ (78 aa)). Residues C140, C143, C156, C159, C178, C181, C192, and C195 each coordinate Zn(2+). CXXCXGXG motif repeat units lie at residues 140–147 (CDSCDGTG), 156–163 (CHACHGQG), 178–185 (CPVCNGTG), and 192–199 (CDACYGNG).

It belongs to the DnaJ family. Homodimer. Zn(2+) serves as cofactor.

It localises to the cytoplasm. Functionally, participates actively in the response to hyperosmotic and heat shock by preventing the aggregation of stress-denatured proteins and by disaggregating proteins, also in an autonomous, DnaK-independent fashion. Unfolded proteins bind initially to DnaJ; upon interaction with the DnaJ-bound protein, DnaK hydrolyzes its bound ATP, resulting in the formation of a stable complex. GrpE releases ADP from DnaK; ATP binding to DnaK triggers the release of the substrate protein, thus completing the reaction cycle. Several rounds of ATP-dependent interactions between DnaJ, DnaK and GrpE are required for fully efficient folding. Also involved, together with DnaK and GrpE, in the DNA replication of plasmids through activation of initiation proteins. This is Chaperone protein DnaJ from Francisella tularensis subsp. tularensis (strain WY96-3418).